The sequence spans 61 residues: Metallothionein-1B (61 aa).

The tract at residues 1–29 (MDPNCSCTTGGSCACAGSCKCKECKCTSC) is beta. A divalent metal cation-binding residues include cysteine 5, cysteine 7, cysteine 13, cysteine 15, cysteine 19, cysteine 21, cysteine 24, cysteine 26, cysteine 29, cysteine 33, cysteine 34, cysteine 36, cysteine 37, cysteine 41, cysteine 44, cysteine 48, cysteine 50, cysteine 57, cysteine 59, and cysteine 60. The interval 30-61 (KKCCCSCCPVGCAKCAQGCVCKGSSEKCRCCA) is alpha.

Belongs to the metallothionein superfamily. Type 1 family. In terms of assembly, monomer.

In terms of biological role, metallothioneins have a high content of cysteine residues that bind various heavy metals; these proteins are transcriptionally regulated by both heavy metals and glucocorticoids. This Homo sapiens (Human) protein is Metallothionein-1B (MT1B).